A 440-amino-acid polypeptide reads, in one-letter code: Histidinol dehydrogenase (440 aa).

Positions 136, 197, and 220 each coordinate NAD(+). Substrate is bound by residues Ser243, Gln265, and His268. Positions 265 and 268 each coordinate Zn(2+). Catalysis depends on proton acceptor residues Glu333 and His334. Residues His334, Asp367, Glu421, and His426 each coordinate substrate. Asp367 is a Zn(2+) binding site. His426 provides a ligand contact to Zn(2+).

It belongs to the histidinol dehydrogenase family. Zn(2+) is required as a cofactor.

It catalyses the reaction L-histidinol + 2 NAD(+) + H2O = L-histidine + 2 NADH + 3 H(+). It participates in amino-acid biosynthesis; L-histidine biosynthesis; L-histidine from 5-phospho-alpha-D-ribose 1-diphosphate: step 9/9. In terms of biological role, catalyzes the sequential NAD-dependent oxidations of L-histidinol to L-histidinaldehyde and then to L-histidine. The polypeptide is Histidinol dehydrogenase (Pseudomonas aeruginosa (strain ATCC 15692 / DSM 22644 / CIP 104116 / JCM 14847 / LMG 12228 / 1C / PRS 101 / PAO1)).